A 394-amino-acid polypeptide reads, in one-letter code: Guanine nucleotide-binding protein G(s) subunit alpha (394 aa).

A disordered region spans residues 1 to 23; it reads MGCLGNSKTEDQRNEEKAQREAN. The N-palmitoyl glycine moiety is linked to residue Gly-2. Residue Cys-3 is the site of S-palmitoyl cysteine attachment. Over residues 8-23 the composition is skewed to basic and acidic residues; it reads KTEDQRNEEKAQREAN. The 356-residue stretch at 39 to 394 folds into the G-alpha domain; the sequence is ATHRLLLLGA…RMHLRQYELL (356 aa). Positions 42 to 55 are G1 motif; the sequence is RLLLLGAGESGKST. 47-55 is a GTP binding site; sequence GAGESGKST. Ser-54 is a binding site for Mg(2+). The disordered stretch occupies residues 68–91; sequence FNGEGGEEDPQAARSNSDGEKATK. The interval 196 to 204 is G2 motif; sequence DLLRCRVLT. Residues 197-204, 223-227, 292-295, and Ala-366 contribute to the GTP site; these read LLRCRVLT, DVGGQ, and NKQD. Thr-204 is a binding site for Mg(2+). A G3 motif region spans residues 219–228; it reads FHMFDVGGQR. Residues 288–295 are G4 motif; it reads ILFLNKQD. Residues 364–369 form a G5 motif region; that stretch reads TCAVDT.

It belongs to the G-alpha family. G(s) subfamily. As to quaternary structure, heterotrimeric G proteins are composed of 3 units; alpha, beta and gamma. The alpha chain contains the guanine nucleotide binding site. Interacts with CRY1; the interaction may block GPCR-mediated regulation of cAMP concentrations. Interacts with ADCY6 and stimulates its adenylyl cyclase activity. Interacts with ADCY2 and ADCY5. Stimulates the ADCY5 adenylyl cyclase activity. Interaction with SASH1.

The protein resides in the cell membrane. Its function is as follows. Guanine nucleotide-binding proteins (G proteins) function as transducers in numerous signaling pathways controlled by G protein-coupled receptors (GPCRs). Signaling involves the activation of adenylyl cyclases, resulting in increased levels of the signaling molecule cAMP. GNAS functions downstream of several GPCRs, including beta-adrenergic receptors. Stimulates the Ras signaling pathway via RAPGEF2. This chain is Guanine nucleotide-binding protein G(s) subunit alpha (GNAS), found in Canis lupus familiaris (Dog).